The chain runs to 305 residues: Probable xyloglucan endotransglucosylase/hydrolase protein 21 (305 aa).

The signal sequence occupies residues 1–25 (MVSSTLLVMSISLFLGLSILLVVHG). One can recognise a GH16 domain in the interval 26 to 216 (KDFNQDIDIT…WSQGPFVASF (191 aa)). Residue N46 is glycosylated (N-linked (GlcNAc...) asparagine). E102 functions as the Nucleophile in the catalytic mechanism. The active-site Proton donor is the E106. E106 provides a ligand contact to xyloglucan. N-linked (GlcNAc...) asparagine glycosylation occurs at N110. Residues 119–121 (HTN) and 129–131 (DRE) each bind xyloglucan. The N-linked (GlcNAc...) asparagine glycan is linked to N146. Residues 195 to 196 (DW) and G200 each bind xyloglucan. Residues N206 and N231 are each glycosylated (N-linked (GlcNAc...) asparagine). Disulfide bonds link C225/C239 and C282/C296. Residues 236 to 253 (TSPCSPGDSTSSSSSSTS) show a composition bias toward low complexity. The tract at residues 236–258 (TSPCSPGDSTSSSSSSTSEWFSQ) is disordered. Position 287 (R287) interacts with xyloglucan.

It belongs to the glycosyl hydrolase 16 family. XTH group 2 subfamily. Post-translationally, contains at least one intrachain disulfide bond essential for its enzymatic activity. As to expression, predominantly expressed in green siliques.

The protein localises to the secreted. Its subcellular location is the cell wall. It is found in the extracellular space. The protein resides in the apoplast. The catalysed reaction is breaks a beta-(1-&gt;4) bond in the backbone of a xyloglucan and transfers the xyloglucanyl segment on to O-4 of the non-reducing terminal glucose residue of an acceptor, which can be a xyloglucan or an oligosaccharide of xyloglucan.. Its function is as follows. Catalyzes xyloglucan endohydrolysis (XEH) and/or endotransglycosylation (XET). Cleaves and religates xyloglucan polymers, an essential constituent of the primary cell wall, and thereby participates in cell wall construction of growing tissues. This is Probable xyloglucan endotransglucosylase/hydrolase protein 21 (XTH21) from Arabidopsis thaliana (Mouse-ear cress).